The primary structure comprises 161 residues: Phenolic acid decarboxylase PadC (161 aa).

Residues Y11 and Y13 each coordinate substrate. The active-site Proton donor is the Y19. Substrate is bound at residue R41. The active-site Proton acceptor is the E64.

The protein belongs to the PadC family. Homodimer.

It carries out the reaction (E)-4-coumarate + H(+) = 4-vinylphenol + CO2. The catalysed reaction is (E)-cinnamate + H(+) = styrene + CO2. The enzyme catalyses (E)-ferulate + H(+) = 2-methoxy-4-vinylphenol + CO2. Involved in the decarboxylation and detoxification of phenolic derivatives. It is able to catalyze the decarboxylation of ferulic, p-coumaric and caffeic acids. In Bacillus subtilis (strain 168), this protein is Phenolic acid decarboxylase PadC (padC).